Here is a 328-residue protein sequence, read N- to C-terminus: Ribosomal protein L11 methyltransferase (328 aa).

Threonine 153, glycine 174, aspartate 196, and asparagine 263 together coordinate S-adenosyl-L-methionine.

Belongs to the methyltransferase superfamily. PrmA family.

The protein resides in the cytoplasm. It carries out the reaction L-lysyl-[protein] + 3 S-adenosyl-L-methionine = N(6),N(6),N(6)-trimethyl-L-lysyl-[protein] + 3 S-adenosyl-L-homocysteine + 3 H(+). In terms of biological role, methylates ribosomal protein L11. The polypeptide is Ribosomal protein L11 methyltransferase (Chloroflexus aurantiacus (strain ATCC 29366 / DSM 635 / J-10-fl)).